The following is a 267-amino-acid chain: PHD finger protein ALFIN-LIKE 7 (267 aa).

The segment at 162–207 (TKVSNGSSKSNKSNPKPSKQSNSNSKPAKPPQPKDEEDSGPEGTED) is disordered. The segment covering 165 to 188 (SNGSSKSNKSNPKPSKQSNSNSKP) has biased composition (low complexity). Acidic residues predominate over residues 196–207 (DEEDSGPEGTED). The segment at 211–263 (AYMCGACGETYANGEFWICCDVCEKWFHGKCVRITPAKAEHIKQYKCPGCSSK) adopts a PHD-type zinc-finger fold.

Belongs to the Alfin family. Interacts with H3K4me3 and to a lesser extent with H3K4me2.

It is found in the nucleus. Histone-binding component that specifically recognizes H3 tails trimethylated on 'Lys-4' (H3K4me3), which mark transcription start sites of virtually all active genes. The chain is PHD finger protein ALFIN-LIKE 7 from Oryza sativa subsp. japonica (Rice).